A 437-amino-acid chain; its full sequence is Sodium/bile acid cotransporter 4 (437 aa).

Over 1–103 (MDGLDNTTRL…PPFWDTPLNH (103 aa)) the chain is Extracellular. Asn6, Asn20, and Asn26 each carry an N-linked (GlcNAc...) asparagine glycan. The segment at 16–84 (LLPDNLTLSP…GGVAGQDSST (69 aa)) is disordered. Residues 21-50 (LTLSPNASSTSASTLSPLPVTSSPSPGLSL) are compositionally biased toward low complexity. A helical membrane pass occupies residues 104 to 124 (GLNVFVGAALCITMLGLGCTV). The Cytoplasmic segment spans residues 125–140 (DVNHFGAHVRRPVGAL). A helical membrane pass occupies residues 141–161 (LAALCQFGFLPLLAFLLALAF). Topologically, residues 162–197 (KLDEVAAVAVLLCGCCPGGNLSNLMSLLVDGDMNLS) are extracellular. 2 N-linked (GlcNAc...) asparagine glycosylation sites follow: Asn181 and Asn195. Residues 198-218 (IIMTISSTLLALVLMPLCLWI) form a helical membrane-spanning segment. At 219–233 (YSRAWINTPLVQLLP) the chain is on the cytoplasmic side. The chain crosses the membrane as a helical span at residues 234–254 (LGAVTLTLCSTLIPIGLGVFI). Residues 255-267 (RYKYNRVADYIVK) lie on the Extracellular side of the membrane. The chain crosses the membrane as a helical span at residues 268 to 288 (VSLCSLLVTLVVLFIMTGTML). Residues 289-291 (GPE) are Cytoplasmic-facing. A helical membrane pass occupies residues 292–312 (LLASIPAAVYVVAIFMPLAGY). The Extracellular portion of the chain corresponds to 313 to 360 (ASGYGLATLFHLPPNCKRTVCLETGSQNVQLCTAILKLAFPPRFIGSM). The helical transmembrane segment at 361-381 (YMFPLLYALFQSAEAGVFVLI) threads the bilayer. Residues 382-437 (YKMYGSEILHKREALDEDDDTDISYKKLKEEELADTSYGTVGTDDLVLMETTQTSL) are Cytoplasmic-facing.

It belongs to the bile acid:sodium symporter (BASS) (TC 2.A.28) family. Post-translationally, activated following N-terminal proteolytic cleavage by thrombin and/or proteases. As to expression, mainly expressed in the central nervous system cholinergic neurons. Expressed (at protein level) in motor regions of the spinal cord and rhombencephalon, in mesopontine cholinergic neurons, the medial habenula, cholinergic areas of the forebrain, and the gut myenteric plexus.

The protein resides in the cell membrane. Its function is as follows. Transporter for bile acids. This chain is Sodium/bile acid cotransporter 4 (Slc10a4), found in Rattus norvegicus (Rat).